The chain runs to 544 residues: Zinc finger protein 502 (544 aa).

A Glycyl lysine isopeptide (Lys-Gly) (interchain with G-Cter in SUMO2) cross-link involves residue K43. 14 C2H2-type zinc fingers span residues 155–177, 183–205, 211–233, 239–261, 267–289, 295–317, 323–345, 351–373, 379–401, 407–429, 435–457, 463–485, 491–513, and 519–541; these read WKCN…QRTH, YTCE…QRIH, YGCE…QRIH, YKCN…QRIH, YICS…QRIH, HKCD…QRIH, YKCK…QRIH, YKCS…QRSH, YKCN…MRIH, YKCK…HRTH, YKCS…YRIH, and YECI…QKLH.

It belongs to the krueppel C2H2-type zinc-finger protein family. In terms of assembly, (Microbial infection) Interacts with human respiratory syncytial virus (HRSV) matrix protein; this interaction probably facilitates viral release.

It localises to the nucleus. Functionally, may be involved in transcriptional regulation. This chain is Zinc finger protein 502 (ZNF502), found in Homo sapiens (Human).